A 193-amino-acid chain; its full sequence is nitroreductase FRM2 (193 aa).

It belongs to the nitroreductase family. It depends on FMN as a cofactor.

Its subcellular location is the cytoplasm. The protein localises to the nucleus. The enzyme catalyses 4-(hydroxyamino)quinoline N-oxide + 2 NAD(+) + H2O = 4-nitroquinoline N-oxide + 2 NADH + 2 H(+). In terms of biological role, type II nitroreductase, able to reduce 4-nitroquinoline N-oxide (4-NQO) into 4-aminoquinoline-N-oxide (4-AQO) via 4-hydroxyaminoquinoline (4-HAQO), using NADH as reductant. involved in the oxidative stress response. Plays a possible role in the metal stress response. Involved in negative regulation of fatty acid metabolism. This chain is nitroreductase FRM2, found in Saccharomyces cerevisiae (strain ATCC 204508 / S288c) (Baker's yeast).